The chain runs to 204 residues: Inactive ribonuclease-like protein 9 (204 aa).

Positions 1–26 (MMRTLITTHPLLLLLLLQQLLQPVQF) are cleaved as a signal peptide. 3 cysteine pairs are disulfide-bonded: C97–C152, C115–C167, and C122–C129. N-linked (GlcNAc...) asparagine glycans are attached at residues N130 and N142.

Belongs to the pancreatic ribonuclease family.

The protein localises to the secreted. Functionally, does not exhibit any ribonuclease activity. The polypeptide is Inactive ribonuclease-like protein 9 (RNASE9) (Papio anubis (Olive baboon)).